A 443-amino-acid chain; its full sequence is UDP-N-acetylmuramate--L-alanine ligase (443 aa).

110–116 (GAHGKTS) contributes to the ATP binding site.

The protein belongs to the MurCDEF family.

Its subcellular location is the cytoplasm. It carries out the reaction UDP-N-acetyl-alpha-D-muramate + L-alanine + ATP = UDP-N-acetyl-alpha-D-muramoyl-L-alanine + ADP + phosphate + H(+). Its pathway is cell wall biogenesis; peptidoglycan biosynthesis. Cell wall formation. The sequence is that of UDP-N-acetylmuramate--L-alanine ligase from Streptococcus agalactiae serotype V (strain ATCC BAA-611 / 2603 V/R).